We begin with the raw amino-acid sequence, 287 residues long: Beta-lactamase GES-1 (287 aa).

Positions M1–A18 are cleaved as a signal peptide. Residues C63 and C233 are joined by a disulfide bond. The Nucleophile; acyl-ester intermediate role is filled by S64. 4 residues coordinate a beta-lactam: K67, S125, E161, and T232.

This sequence belongs to the class-A beta-lactamase family. In terms of assembly, monomer. May form dimers.

It catalyses the reaction a beta-lactam + H2O = a substituted beta-amino acid. Its activity is regulated as follows. Inhibited by the beta-lactamase-blocking agents clavulanic acid, tazobactam, sulbactam and tazobactam and the carbapenem, imipenem. Inhibition by imipenem may involve Gly-165. Extended-spectrum beta-lactamase (ESBL) which confers resistance to penicillins, as well as first, second, third and fourth-generation cephalosporins. Has ceftazidime-hydrolyzing activity. Inactive against the carbapenems, imipenem, meropenem, ertapenem and doripenem. However, weak hydrolytic activity with respect to imipenem has also been reported. This Klebsiella pneumoniae protein is Beta-lactamase GES-1.